Consider the following 361-residue polypeptide: Peptide chain release factor 1 (361 aa).

At Gln-235 the chain carries N5-methylglutamine. Residues 286–305 (IDSARSAERKQKVGSGDRSE) form a disordered region.

Belongs to the prokaryotic/mitochondrial release factor family. Methylated by PrmC. Methylation increases the termination efficiency of RF1.

The protein resides in the cytoplasm. Functionally, peptide chain release factor 1 directs the termination of translation in response to the peptide chain termination codons UAG and UAA. This Rhodopseudomonas palustris (strain HaA2) protein is Peptide chain release factor 1.